We begin with the raw amino-acid sequence, 178 residues long: Large ribosomal subunit protein uL6 (178 aa).

This sequence belongs to the universal ribosomal protein uL6 family. As to quaternary structure, part of the 50S ribosomal subunit.

Its function is as follows. This protein binds to the 23S rRNA, and is important in its secondary structure. It is located near the subunit interface in the base of the L7/L12 stalk, and near the tRNA binding site of the peptidyltransferase center. The sequence is that of Large ribosomal subunit protein uL6 from Leuconostoc mesenteroides subsp. mesenteroides (strain ATCC 8293 / DSM 20343 / BCRC 11652 / CCM 1803 / JCM 6124 / NCDO 523 / NBRC 100496 / NCIMB 8023 / NCTC 12954 / NRRL B-1118 / 37Y).